A 103-amino-acid polypeptide reads, in one-letter code: Large ribosomal subunit protein bL21 (103 aa).

Belongs to the bacterial ribosomal protein bL21 family. As to quaternary structure, part of the 50S ribosomal subunit. Contacts protein L20.

Functionally, this protein binds to 23S rRNA in the presence of protein L20. The sequence is that of Large ribosomal subunit protein bL21 from Dechloromonas aromatica (strain RCB).